Here is a 671-residue protein sequence, read N- to C-terminus: DNA ligase (671 aa).

Residues 32–36 (DAEYD), 81–82 (SL), and Glu-113 contribute to the NAD(+) site. Lys-115 serves as the catalytic N6-AMP-lysine intermediate. 4 residues coordinate NAD(+): Arg-136, Glu-173, Lys-290, and Lys-314. Cys-408, Cys-411, Cys-426, and Cys-432 together coordinate Zn(2+). The region spanning 593 to 671 (EIDSPFAGKT…ETEMLHLLGS (79 aa)) is the BRCT domain.

This sequence belongs to the NAD-dependent DNA ligase family. LigA subfamily. It depends on Mg(2+) as a cofactor. Mn(2+) serves as cofactor.

The enzyme catalyses NAD(+) + (deoxyribonucleotide)n-3'-hydroxyl + 5'-phospho-(deoxyribonucleotide)m = (deoxyribonucleotide)n+m + AMP + beta-nicotinamide D-nucleotide.. Functionally, DNA ligase that catalyzes the formation of phosphodiester linkages between 5'-phosphoryl and 3'-hydroxyl groups in double-stranded DNA using NAD as a coenzyme and as the energy source for the reaction. It is essential for DNA replication and repair of damaged DNA. The sequence is that of DNA ligase from Escherichia coli O6:K15:H31 (strain 536 / UPEC).